A 141-amino-acid polypeptide reads, in one-letter code: MDRPKPFSVQQLADTLCIPLVDILLPCRFCQRFLTYIELVSLNRKGLQLIWTEEDFVFACCSSCAFATAQFEFSNFYEQSVCSWEIEIVEQKPVGDIIIRCKFCLKKLDLIEKLDICYKEEQFHKVRRNWKGLCRHCRAIE.

Zinc fingers lie at residues 27–64 and 101–137; these read CRFC…CSSC and CKFC…CRHC.

This sequence belongs to the papillomaviridae E6 protein family. As to quaternary structure, forms homodimers. Interacts with ubiquitin-protein ligase UBE3A/E6-AP; this interaction stimulates UBE3A ubiquitin activity. Interacts with host BAK1.

The protein localises to the host cytoplasm. The protein resides in the host nucleus. Functionally, plays a major role in the induction and maintenance of cellular transformation. E6 associates with host UBE3A/E6-AP ubiquitin-protein ligase and modulates its activity. Protects host keratinocytes from apoptosis by mediating the degradation of host BAK1. May also inhibit host immune response. The sequence is that of Protein E6 from Human papillomavirus 15.